The chain runs to 424 residues: Tol-Pal system protein TolB (424 aa).

A signal peptide spans 1 to 20 (MKQFIVFILSLYTTLSWAVL).

The protein belongs to the TolB family. In terms of assembly, the Tol-Pal system is composed of five core proteins: the inner membrane proteins TolA, TolQ and TolR, the periplasmic protein TolB and the outer membrane protein Pal. They form a network linking the inner and outer membranes and the peptidoglycan layer.

It is found in the periplasm. Part of the Tol-Pal system, which plays a role in outer membrane invagination during cell division and is important for maintaining outer membrane integrity. The chain is Tol-Pal system protein TolB from Vesicomyosocius okutanii subsp. Calyptogena okutanii (strain HA).